The primary structure comprises 761 residues: Signal transducer and transcription activator (761 aa).

The region spanning Trp594–Val658 is the SH2 domain. Phosphotyrosine; by JAK is present on Tyr711.

The protein belongs to the transcription factor STAT family. Forms a homodimer or a heterodimer with a related family member. Post-translationally, tyrosine phosphorylated by hopscotch. Phosphorylation is required for DNA-binding activity and dimerization.

The protein localises to the cytoplasm. The protein resides in the nucleus. In terms of biological role, might play a role in signal transduction and activation of transcription. Plays an important role in the segmental pattern formation in the early embryo by activating specific stripes of pair rule gene expression in early development as part of the Janus kinase-STAT pathway. Might play a role in male germline stem cell maintenance. The protein is Signal transducer and transcription activator (Stat92E) of Drosophila melanogaster (Fruit fly).